The primary structure comprises 86 residues: Toxin ICK-18 (86 aa).

Positions 1 to 19 (MKTIFALVFCCAIAVVVLG) are cleaved as a signal peptide. Cystine bridges form between Cys-35-Cys-49, Cys-42-Cys-61, Cys-48-Cys-76, and Cys-79-Cys-86.

This sequence belongs to the neurotoxin 21 family. As to expression, expressed by the venom gland.

It localises to the secreted. Functionally, probable neurotoxin with ion channel impairing activity. This Trittame loki (Brush-footed trapdoor spider) protein is Toxin ICK-18.